Consider the following 220-residue polypeptide: uncharacterized protein (220 aa).

A run of 7 helical transmembrane segments spans residues 6–26 (FSILVDFAAGGLVLASVLIVW), 33–53 (IVRLLAWQGAALAAIPLLRGI), 59–79 (ALIAVGIAVLALRALVLPWLL), 103–123 (LLITAGLTLTAFAITQPVVNL), 126–146 (GVTINAVPAAFAVVLIALFVM), 157–177 (AGFLMLDNGIAATAFLLTAGV), and 179–199 (LIVELGASLDVLFAVIVIGVL).

The protein resides in the cell membrane. This is an uncharacterized protein from Mycobacterium tuberculosis (strain ATCC 25618 / H37Rv).